A 129-amino-acid chain; its full sequence is Large ribosomal subunit protein bL19 (129 aa).

This sequence belongs to the bacterial ribosomal protein bL19 family.

This protein is located at the 30S-50S ribosomal subunit interface and may play a role in the structure and function of the aminoacyl-tRNA binding site. The sequence is that of Large ribosomal subunit protein bL19 from Paraburkholderia phytofirmans (strain DSM 17436 / LMG 22146 / PsJN) (Burkholderia phytofirmans).